The sequence spans 452 residues: D-inositol 3-phosphate glycosyltransferase (452 aa).

1D-myo-inositol 3-phosphate is bound at residue His25. Residues 31 to 32 and Gly39 contribute to the UDP-N-acetyl-alpha-D-glucosamine site; that span reads QP. Residues 36–41, Lys94, Tyr127, Thr151, and Arg171 contribute to the 1D-myo-inositol 3-phosphate site; that span reads DAGGMN. Arg245, Lys250, and Gln309 together coordinate UDP-N-acetyl-alpha-D-glucosamine. 3 residues coordinate Mg(2+): Tyr318, Arg319, and Ser321. Positions 331 and 339 each coordinate UDP-N-acetyl-alpha-D-glucosamine. Thr345 lines the Mg(2+) pocket.

This sequence belongs to the glycosyltransferase group 1 family. MshA subfamily. As to quaternary structure, homodimer.

It carries out the reaction 1D-myo-inositol 3-phosphate + UDP-N-acetyl-alpha-D-glucosamine = 1D-myo-inositol 2-acetamido-2-deoxy-alpha-D-glucopyranoside 3-phosphate + UDP + H(+). Its function is as follows. Catalyzes the transfer of a N-acetyl-glucosamine moiety to 1D-myo-inositol 3-phosphate to produce 1D-myo-inositol 2-acetamido-2-deoxy-glucopyranoside 3-phosphate in the mycothiol biosynthesis pathway. The polypeptide is D-inositol 3-phosphate glycosyltransferase (Rhodococcus jostii (strain RHA1)).